The primary structure comprises 292 residues: 33 kDa chaperonin (292 aa).

2 disulfide bridges follow: cysteine 237-cysteine 239 and cysteine 270-cysteine 273.

It belongs to the HSP33 family. Post-translationally, under oxidizing conditions two disulfide bonds are formed involving the reactive cysteines. Under reducing conditions zinc is bound to the reactive cysteines and the protein is inactive.

Its subcellular location is the cytoplasm. In terms of biological role, redox regulated molecular chaperone. Protects both thermally unfolding and oxidatively damaged proteins from irreversible aggregation. Plays an important role in the bacterial defense system toward oxidative stress. The sequence is that of 33 kDa chaperonin from Lachnoclostridium phytofermentans (strain ATCC 700394 / DSM 18823 / ISDg) (Clostridium phytofermentans).